Here is a 287-residue protein sequence, read N- to C-terminus: Bifunctional protein FolD (287 aa).

NADP(+) contacts are provided by residues 165 to 167 (GRS), Ser190, and Ile231.

Belongs to the tetrahydrofolate dehydrogenase/cyclohydrolase family. As to quaternary structure, homodimer.

It catalyses the reaction (6R)-5,10-methylene-5,6,7,8-tetrahydrofolate + NADP(+) = (6R)-5,10-methenyltetrahydrofolate + NADPH. The catalysed reaction is (6R)-5,10-methenyltetrahydrofolate + H2O = (6R)-10-formyltetrahydrofolate + H(+). It participates in one-carbon metabolism; tetrahydrofolate interconversion. Its function is as follows. Catalyzes the oxidation of 5,10-methylenetetrahydrofolate to 5,10-methenyltetrahydrofolate and then the hydrolysis of 5,10-methenyltetrahydrofolate to 10-formyltetrahydrofolate. This chain is Bifunctional protein FolD, found in Carboxydothermus hydrogenoformans (strain ATCC BAA-161 / DSM 6008 / Z-2901).